A 334-amino-acid chain; its full sequence is Adenine deaminase (334 aa).

Zn(2+) contacts are provided by His-14, His-16, and His-194. Glu-197 acts as the Proton donor in catalysis. Asp-275 is a binding site for Zn(2+). Residue Asp-276 coordinates substrate.

The protein belongs to the metallo-dependent hydrolases superfamily. Adenosine and AMP deaminases family. Adenine deaminase type 2 subfamily. Zn(2+) serves as cofactor.

It carries out the reaction adenine + H2O + H(+) = hypoxanthine + NH4(+). Its function is as follows. Catalyzes the hydrolytic deamination of adenine to hypoxanthine. Plays an important role in the purine salvage pathway and in nitrogen catabolism. This Hahella chejuensis (strain KCTC 2396) protein is Adenine deaminase.